The primary structure comprises 486 residues: Protein nucleotidyltransferase YdiU (486 aa).

ATP contacts are provided by G90, G92, R93, K113, D125, G126, R176, and R183. D252 acts as the Proton acceptor in catalysis. Mg(2+)-binding residues include N253 and D262. D262 contributes to the ATP binding site.

This sequence belongs to the SELO family. It depends on Mg(2+) as a cofactor. Mn(2+) serves as cofactor.

It carries out the reaction L-seryl-[protein] + ATP = 3-O-(5'-adenylyl)-L-seryl-[protein] + diphosphate. The enzyme catalyses L-threonyl-[protein] + ATP = 3-O-(5'-adenylyl)-L-threonyl-[protein] + diphosphate. It catalyses the reaction L-tyrosyl-[protein] + ATP = O-(5'-adenylyl)-L-tyrosyl-[protein] + diphosphate. The catalysed reaction is L-histidyl-[protein] + UTP = N(tele)-(5'-uridylyl)-L-histidyl-[protein] + diphosphate. It carries out the reaction L-seryl-[protein] + UTP = O-(5'-uridylyl)-L-seryl-[protein] + diphosphate. The enzyme catalyses L-tyrosyl-[protein] + UTP = O-(5'-uridylyl)-L-tyrosyl-[protein] + diphosphate. Functionally, nucleotidyltransferase involved in the post-translational modification of proteins. It can catalyze the addition of adenosine monophosphate (AMP) or uridine monophosphate (UMP) to a protein, resulting in modifications known as AMPylation and UMPylation. The chain is Protein nucleotidyltransferase YdiU from Pseudomonas paraeruginosa (strain DSM 24068 / PA7) (Pseudomonas aeruginosa (strain PA7)).